Here is a 237-residue protein sequence, read N- to C-terminus: H/ACA ribonucleoprotein complex subunit 1 (237 aa).

2 stretches are compositionally biased toward gly residues: residues 1–59 (MGFG…GGRG) and 172–237 (RGGG…RGRW). Disordered regions lie at residues 1–64 (MGFG…FDTG) and 157–237 (KPPQ…RGRW). RGG-box regions lie at residues 4–56 (GKPR…GRGG) and 166–236 (KAFT…GRGR).

It belongs to the GAR1 family. Component of the box H/ACA small nucleolar ribonucleoprotein (H/ACA snoRNP) complex consisting of Nop60B, Gar1, NPH2 and Nop10, and associated with H/ACA-type snoRNAs.

Its subcellular location is the nucleus. It localises to the nucleolus. In terms of biological role, component of the box H/ACA small nucleolar ribonucleoprotein (H/ACA snoRNP) complex, which catalyzes pseudouridylation of rRNA. This involves the isomerization of uridine such that the ribose is subsequently attached to C5, instead of the normal N1. Pseudouridine ('psi') residues may serve to stabilize the conformation of rRNAs. Required for ribosome biogenesis. H/ACA snoRNP complex-dependent ribosome biogenesis is important in female germline cell differentiation during oogenesis. This Drosophila melanogaster (Fruit fly) protein is H/ACA ribonucleoprotein complex subunit 1.